The sequence spans 90 residues: Small ribosomal subunit protein uS15c (90 aa).

Belongs to the universal ribosomal protein uS15 family. In terms of assembly, part of the 30S ribosomal subunit.

It localises to the plastid. It is found in the chloroplast. In Pelargonium hortorum (Common geranium), this protein is Small ribosomal subunit protein uS15c (rps15-A).